The primary structure comprises 161 residues: Allophycocyanin alpha chain 2 (161 aa).

The residue at position 71 (Asn71) is an N4-methylasparagine. Cys81 is a (2R,3E)-phycocyanobilin binding site.

It belongs to the phycobiliprotein family. In terms of assembly, component of the phycobilisome. Heterodimer of an alpha and a beta chain. Post-translationally, contains one covalently linked bilin chromophore.

The protein localises to the cellular thylakoid membrane. In terms of biological role, light-harvesting photosynthetic bile pigment-protein from the phycobiliprotein complex. Allophycocyanin has a maximum absorption at approximately 650 nanometers. This chain is Allophycocyanin alpha chain 2 (apcA2), found in Microchaete diplosiphon (Fremyella diplosiphon).